The sequence spans 119 residues: Large ribosomal subunit protein uL18 (119 aa).

This sequence belongs to the universal ribosomal protein uL18 family. Part of the 50S ribosomal subunit; part of the 5S rRNA/L5/L18/L25 subcomplex. Contacts the 5S and 23S rRNAs.

In terms of biological role, this is one of the proteins that bind and probably mediate the attachment of the 5S RNA into the large ribosomal subunit, where it forms part of the central protuberance. This is Large ribosomal subunit protein uL18 from Borrelia recurrentis (strain A1).